The following is a 508-amino-acid chain: MTEPTQPQAAVAADENQIVAERRDKLRALRDQGIAYPNDFQPTHHAAGLQTEYADADKEALDAKALDVAVAGRMMLKRVMGKASFATVQDGSGQIQFFVTPADVGAETYDAFKKWDLGDIVAARGVLFRTNKGELSVKCTELRLLAKALRPLPDKFHGLADQETRYRQRYVDLIVTPETRATFRARTKAIASIRKFMSDADFMEVETPMLHPIPGGAAAKPFVTHHNALDMQMFLRIAPELYLKRLIVGGFERVFEINRNFRNEGVSPRHNPEFTMMEFYAAYTDYRWLMDFTERLIRQAAVDALGTATIRYQGRELDLAKPFHRLTITQAIQKYAPNYTDGQLSDDAFLRGELKRLGVDVTQPAFLNAGIGALQLALFEETAEAQLWEPTFIIDYPIEVSPLARESDTVAGITERFELFVTGREIANGFSELNDPEDQAARFRKQVEQKDAGDEEAMFFDADYIRALEYGMPPTGGCGIGIDRLVMLLTDSPTIRDVLLFPHLRRED.

Glu-418 and Glu-425 together coordinate Mg(2+).

This sequence belongs to the class-II aminoacyl-tRNA synthetase family. Homodimer. It depends on Mg(2+) as a cofactor.

It is found in the cytoplasm. It carries out the reaction tRNA(Lys) + L-lysine + ATP = L-lysyl-tRNA(Lys) + AMP + diphosphate. This is Lysine--tRNA ligase from Burkholderia mallei (strain NCTC 10247).